Here is a 163-residue protein sequence, read N- to C-terminus: Nucleotide-binding protein BLi01194 (163 aa).

This sequence belongs to the YajQ family.

In terms of biological role, nucleotide-binding protein. The chain is Nucleotide-binding protein BLi01194 from Bacillus licheniformis (strain ATCC 14580 / DSM 13 / JCM 2505 / CCUG 7422 / NBRC 12200 / NCIMB 9375 / NCTC 10341 / NRRL NRS-1264 / Gibson 46).